A 483-amino-acid polypeptide reads, in one-letter code: UDP-N-acetylmuramate--L-alanine ligase (483 aa).

112–118 (GTHGKTT) lines the ATP pocket.

The protein belongs to the MurCDEF family.

Its subcellular location is the cytoplasm. It catalyses the reaction UDP-N-acetyl-alpha-D-muramate + L-alanine + ATP = UDP-N-acetyl-alpha-D-muramoyl-L-alanine + ADP + phosphate + H(+). It functions in the pathway cell wall biogenesis; peptidoglycan biosynthesis. Cell wall formation. This Ralstonia pickettii (strain 12J) protein is UDP-N-acetylmuramate--L-alanine ligase.